The primary structure comprises 416 residues: Chaperone protein dnaJ A6 (416 aa).

The region spanning 12 to 73 is the J domain; that stretch reads KYYEVLGVPK…EKRDIYDQYG (62 aa). Residues 133-217 form a CR-type zinc finger; that stretch reads GSMKKLSLSR…CRASKVIQEK (85 aa). Positions 146, 149, 162, 165, 189, 192, 205, and 208 each coordinate Zn(2+). CXXCXGXG motif repeat units lie at residues 146–153, 162–169, and 189–196; these read CPKCKGKG, CYGCHGVG, and CPECRGSG. Positions 380–399 are enriched in basic and acidic residues; the sequence is HDVNIEEEMRRKQYQRKQEA. Residues 380 to 416 are disordered; sequence HDVNIEEEMRRKQYQRKQEAYDEDEEEDAPRVQCAQQ.

This sequence belongs to the DnaJ family. In terms of assembly, interacts with ZFP1.

Its subcellular location is the nucleus. The protein resides in the cytoplasm. Its function is as follows. Involved in disease resistance. Acts as a negative regulator of innate immunity to the rice blast fungus (Magnaporthe oryzae). Acts as a negative regulator of the pathogen-associated molecular pattern (PAMP)-triggered immunity (PTI) response through the inhibition of reactive oxygen species (ROS) accumulation and expression of defense-related genes. May function via the ubiquitin-proteasome degradation pathway. In Oryza sativa subsp. japonica (Rice), this protein is Chaperone protein dnaJ A6.